Consider the following 119-residue polypeptide: Large ribosomal subunit protein uL14 (119 aa).

The protein belongs to the universal ribosomal protein uL14 family. In terms of assembly, part of the 50S ribosomal subunit. Forms a cluster with proteins L3 and L19. In the 70S ribosome, L14 and L19 interact and together make contacts with the 16S rRNA in bridges B5 and B8.

In terms of biological role, binds to 23S rRNA. Forms part of two intersubunit bridges in the 70S ribosome. This is Large ribosomal subunit protein uL14 from Ehrlichia chaffeensis (strain ATCC CRL-10679 / Arkansas).